The following is a 572-amino-acid chain: MSKLIKGIAASDGVAIAKAYLLVEPDLTFDKNEKVTDVEGEVAKFNSAIEASKVELTKIRNNAEVQLGADKAAIFDAHLLVLDDPELIQPIQDKIKNENANAATALTDVTTQFVTIFESMDNEYMKERAADIRDVSKRVLSHILGVELPNPSMIDESVVIVGNDLTPSDTAQLNKEFVQGFATNIGGRTSHSAIMSRSLEIPAIVGTKSITQEVKQGDMIIVDGLNGDVIVNPTEDELIAYQDKRERYFADKKELQKLRDADTVTVDGVHAELAANIGTPNDLPGVIENGAQGIGLYRTEFLYMGRDQMPTEEEQFEAYKEVLEAMGGKRVVVRTLDIGGDKELSYLNLPEEMNPFLGYRAIRLCLAQQDIFRPQLRALLRASVYGKLNIMFPMVATINEFREAKAILLEEKENLKNEGHDISDDIELGIMVEIPATAALADVFAKEVDFFSIGTNDLIQYTLAADRMSERVSYLYQPYNPSILRLVKQVIEASHKEGKWTGMCGEMAGDETAIPLLLGLGLDEFSMSATSILKARRQINGLSKNEMTELANRAVDCATQEEVIELVNNYVK.

His-191 serves as the catalytic Tele-phosphohistidine intermediate. Residues Arg-298 and Arg-334 each coordinate phosphoenolpyruvate. The Mg(2+) site is built by Glu-433 and Asp-457. Phosphoenolpyruvate contacts are provided by residues 456–457 and Arg-467; that span reads ND. Cys-504 serves as the catalytic Proton donor.

Belongs to the PEP-utilizing enzyme family. As to quaternary structure, homodimer. Requires Mg(2+) as cofactor.

It is found in the cytoplasm. The catalysed reaction is L-histidyl-[protein] + phosphoenolpyruvate = N(pros)-phospho-L-histidyl-[protein] + pyruvate. General (non sugar-specific) component of the phosphoenolpyruvate-dependent sugar phosphotransferase system (sugar PTS). This major carbohydrate active-transport system catalyzes the phosphorylation of incoming sugar substrates concomitantly with their translocation across the cell membrane. Enzyme I transfers the phosphoryl group from phosphoenolpyruvate (PEP) to the phosphoryl carrier protein (HPr). This chain is Phosphoenolpyruvate-protein phosphotransferase (ptsI), found in Staphylococcus aureus (strain COL).